The primary structure comprises 495 residues: Bifunctional protein GlmU (495 aa).

Residues 1–241 (MTFPGDTAVL…SALVAGVNNR (241 aa)) form a pyrophosphorylase region. UDP-N-acetyl-alpha-D-glucosamine is bound by residues 12 to 15 (LAAG), Lys-26, Gln-83, 88 to 89 (GT), 112 to 114 (SGD), Gly-151, Glu-166, Asn-181, and Asn-239. Asp-114 contacts Mg(2+). Asn-239 lines the Mg(2+) pocket. Residues 242–262 (VQLAELASELNRRVVAAHQLA) are linker. Positions 263-495 (GVTVVDPATT…TQPPDADQTP (233 aa)) are N-acetyltransferase. UDP-N-acetyl-alpha-D-glucosamine-binding residues include Arg-344 and Lys-362. His-374 acts as the Proton acceptor in catalysis. Positions 377 and 388 each coordinate UDP-N-acetyl-alpha-D-glucosamine. Residues Ala-391, 397–398 (NY), Ser-416, and Ala-434 contribute to the acetyl-CoA site. The segment at 457–495 (IENWVQRKRPGSPAAQASKRASEMACQQPTQPPDADQTP) is disordered. The segment covering 483-495 (QQPTQPPDADQTP) has biased composition (low complexity).

The protein in the N-terminal section; belongs to the N-acetylglucosamine-1-phosphate uridyltransferase family. In the C-terminal section; belongs to the transferase hexapeptide repeat family. In terms of assembly, homotrimer. Mg(2+) serves as cofactor.

The protein localises to the cytoplasm. The enzyme catalyses alpha-D-glucosamine 1-phosphate + acetyl-CoA = N-acetyl-alpha-D-glucosamine 1-phosphate + CoA + H(+). The catalysed reaction is N-acetyl-alpha-D-glucosamine 1-phosphate + UTP + H(+) = UDP-N-acetyl-alpha-D-glucosamine + diphosphate. It functions in the pathway nucleotide-sugar biosynthesis; UDP-N-acetyl-alpha-D-glucosamine biosynthesis; N-acetyl-alpha-D-glucosamine 1-phosphate from alpha-D-glucosamine 6-phosphate (route II): step 2/2. The protein operates within nucleotide-sugar biosynthesis; UDP-N-acetyl-alpha-D-glucosamine biosynthesis; UDP-N-acetyl-alpha-D-glucosamine from N-acetyl-alpha-D-glucosamine 1-phosphate: step 1/1. Its pathway is bacterial outer membrane biogenesis; LPS lipid A biosynthesis. Its function is as follows. Catalyzes the last two sequential reactions in the de novo biosynthetic pathway for UDP-N-acetylglucosamine (UDP-GlcNAc). The C-terminal domain catalyzes the transfer of acetyl group from acetyl coenzyme A to glucosamine-1-phosphate (GlcN-1-P) to produce N-acetylglucosamine-1-phosphate (GlcNAc-1-P), which is converted into UDP-GlcNAc by the transfer of uridine 5-monophosphate (from uridine 5-triphosphate), a reaction catalyzed by the N-terminal domain. The polypeptide is Bifunctional protein GlmU (Mycobacterium tuberculosis (strain ATCC 25177 / H37Ra)).